Here is a 428-residue protein sequence, read N- to C-terminus: Beta-1,3-galactosyl-O-glycosyl-glycoprotein beta-1,6-N-acetylglucosaminyltransferase (428 aa).

Residues 1-9 (MLRNLFRRR) lie on the Cytoplasmic side of the membrane. Positions 5 to 9 (LFRRR) are mediates interaction with GOLPH3 and is necessary and sufficient for localization to the Golgi. Residues 10 to 32 (LFSCPTKYYFMLLVLSLITFSVL) form a helical; Signal-anchor for type II membrane protein membrane-spanning segment. The segment at 33-121 (RIHQKPEFFS…EPLTKEEVGF (89 aa)) is stem region. Residues 33-428 (RIHQKPEFFS…RHKALENLEH (396 aa)) are Lumenal-facing. Asparagine 58 and asparagine 95 each carry an N-linked (GlcNAc...) asparagine glycan. 4 disulfide bridges follow: cysteine 59–cysteine 413, cysteine 100–cysteine 172, cysteine 151–cysteine 199, and cysteine 372–cysteine 381. A catalytic region spans residues 122–428 (PIAYSIVVHH…RHKALENLEH (307 aa)). UDP-N-acetyl-alpha-D-glucosamine contacts are provided by residues 128 to 130 (VVH), 155 to 157 (DRK), and tyrosine 187. Residues glutamate 243, asparagine 250, lysine 251, arginine 254, glutamate 320, lysine 341, and tyrosine 358 each coordinate a glycoprotein. The active-site Nucleophile is the glutamate 320. Residues arginine 378 and lysine 401 each contribute to the UDP-N-acetyl-alpha-D-glucosamine site.

It belongs to the glycosyltransferase 14 family. As to quaternary structure, interacts with GOLPH3; may control GCNT1 retention in the Golgi. In terms of processing, N-glycosylated. Expressed in kidney, liver, stomach, spleen, lung and brain.

The protein resides in the golgi apparatus membrane. The enzyme catalyses a 3-O-[beta-D-galactosyl-(1-&gt;3)-N-acetyl-alpha-D-galactosaminyl]-L-seryl-[protein] + UDP-N-acetyl-alpha-D-glucosamine = 3-O-{beta-D-galactosyl-(1-&gt;3)-[N-acetyl-beta-D-glucosaminyl-(1-&gt;6)]-N-acetyl-alpha-D-galactosaminyl}-L-seryl-[protein] + UDP + H(+). The catalysed reaction is a 3-O-[beta-D-galactosyl-(1-&gt;3)-N-acetyl-alpha-D-galactosaminyl]-L-threonyl-[protein] + UDP-N-acetyl-alpha-D-glucosamine = a 3-O-{beta-D-galactosyl-(1-&gt;3)-[N-acetyl-beta-D-glucosaminyl-(1-&gt;6)]-N-acetyl-alpha-D-galactosaminyl}-L-threonyl-[protein] + UDP + H(+). It catalyses the reaction a globoside GalGb4Cer + UDP-N-acetyl-alpha-D-glucosamine = a globoside GlcNAc-(beta1-&gt;6)-GalGb4Cer + UDP + H(+). It carries out the reaction a ganglioside GA1 + UDP-N-acetyl-alpha-D-glucosamine = a ganglioside beta-D-GlcNAc-(1-&gt;6)-GA1 + UDP + H(+). The protein operates within protein modification; protein glycosylation. It participates in glycolipid biosynthesis. Inactivated by thiol-reactive agents. Inhibited by free UDP. In terms of biological role, glycosyltransferase that catalyzes the transfer of an N-acetylglucosamine (GlcNAc) moiety in beta1-6 linkage from UDP-GlcNAc onto mucin-type core 1 O-glycan to form the branched mucin-type core 2 O-glycan. The catalysis is metal ion-independent and occurs with inversion of the anomeric configuration of sugar donor. Selectively involved in synthesis of mucin-type core 2 O-glycans that serve as scaffolds for the display of selectin ligand sialyl Lewis X epitope by myeloid cells, with an impact on homeostasis and recruitment to inflammatory sites. Can also act on glycolipid substrates. Transfers GlcNAc moiety to GalGb4Cer globosides in a reaction step to the synthesis of stage-specific embryonic antigen 1 (SSEA-1) determinant. Can use Galbeta1-3GalNAcalpha1-R and Galbeta1-3GalNAcbeta1-R oligosaccharide derivatives as acceptor substrates. In Mus musculus (Mouse), this protein is Beta-1,3-galactosyl-O-glycosyl-glycoprotein beta-1,6-N-acetylglucosaminyltransferase (Gcnt1).